The chain runs to 539 residues: MLGQMMTQPLLISSLIDHAARYHGQTEIVSVETDGTVTRTNWGEIAANARRMGSALTKLGLQPQDRIGTLAWNNRRHLEIYYAASGAGFVCHTINPRLFPEQLVYIINHAQDRVLFFDATFLPLVAAIRDQLTEVKHFVLMGPRNEDALQQIPGLEFYDELIETGDTDFEWPVFDENTASSLCYTSGTTGHPKGVLYSHRSTVLHSFASNTRDVIGYSAMDVVMPVVPMFHVNAWGSPYGCAMSGAQMVLPGPDLHGEALVNLIDTYGVTLAMGVPTIWQGLLAHAAKCGTKLESLERTVIGGAACPPSMIATFREKYGVDTVHAWGMSEMSPLGTANIPLAKHRKLPIEEQHKLRENQGRPPFGVELKIVDDDGNDLPHDGVTQGDLMVRGHWVLDSYFQLKDQELLQDGWFATGDVATLDPDGYMTIRDRSKDIIKSGGEWISSVELENIAVAHPKLATAAVIGVPHPKWDERPLLVAVKAEGEDPSEAELLEFFDGKIAKWQVPDKVVFVDALPLNATGKVLKRKLRDEFKDALTG.

T185 lines the Mg(2+) pocket. 5 residues coordinate ATP: H231, G303, H324, A325, and S329. E330 provides a ligand contact to Mg(2+). Q359, D417, R432, and K523 together coordinate ATP.

It belongs to the ATP-dependent AMP-binding enzyme family. As to quaternary structure, homodimer. Mg(2+) is required as a cofactor.

The enzyme catalyses 3-(methylsulfanyl)propanoate + ATP + CoA = 3-(methylsulfanyl)propanoyl-CoA + AMP + diphosphate. ADP acts as a competitive inhibitor and inhibits the ligase activity. In terms of biological role, involved in the assimilation of dimethylsulphoniopropionate (DMSP), an important compound in the fixation of carbon in marine phytoplankton. Catalyzes the ATP-dependent ligation of methylmercaptopropionate (MMPA) and CoA to yield methylmercaptopropionate-CoA (MMPA-CoA). The protein is 3-methylmercaptopropionyl-CoA ligase of Ruegeria lacuscaerulensis (strain DSM 11314 / KCTC 2953 / ITI-1157) (Silicibacter lacuscaerulensis).